The primary structure comprises 101 residues: Cilia- and flagella-associated protein 141 (101 aa).

As to quaternary structure, microtubule inner protein component of sperm flagellar doublet microtubules. As to expression, expressed in airway epithelial cells.

It localises to the cytoplasm. The protein localises to the cytoskeleton. The protein resides in the cilium axoneme. Its subcellular location is the flagellum axoneme. Its function is as follows. Microtubule inner protein (MIP) part of the dynein-decorated doublet microtubules (DMTs) in cilia axoneme, which is required for motile cilia beating. In Homo sapiens (Human), this protein is Cilia- and flagella-associated protein 141.